Here is a 377-residue protein sequence, read N- to C-terminus: O-phospho-L-seryl-tRNA:Cys-tRNA synthase (377 aa).

Residues 82–83, asparagine 189, and 212–214 contribute to the pyridoxal 5'-phosphate site; these read AR and SGH. At lysine 215 the chain carries N6-(pyridoxal phosphate)lysine.

Belongs to the SepCysS family. In terms of assembly, homodimer. Interacts with SepRS. It depends on pyridoxal 5'-phosphate as a cofactor.

It carries out the reaction O-phospho-L-seryl-tRNA(Cys) + hydrogen sulfide + H(+) = L-cysteinyl-tRNA(Cys) + phosphate. Functionally, converts O-phospho-L-seryl-tRNA(Cys) (Sep-tRNA(Cys)) to L-cysteinyl-tRNA(Cys) (Cys-tRNA(Cys)). The protein is O-phospho-L-seryl-tRNA:Cys-tRNA synthase of Methanocaldococcus jannaschii (strain ATCC 43067 / DSM 2661 / JAL-1 / JCM 10045 / NBRC 100440) (Methanococcus jannaschii).